Here is a 186-residue protein sequence, read N- to C-terminus: ATP synthase subunit delta (186 aa).

It belongs to the ATPase delta chain family. In terms of assembly, F-type ATPases have 2 components, F(1) - the catalytic core - and F(0) - the membrane proton channel. F(1) has five subunits: alpha(3), beta(3), gamma(1), delta(1), epsilon(1). CF(0) has four main subunits: a(1), b(1), b'(1) and c(10-14). The alpha and beta chains form an alternating ring which encloses part of the gamma chain. F(1) is attached to F(0) by a central stalk formed by the gamma and epsilon chains, while a peripheral stalk is formed by the delta, b and b' chains.

It is found in the cell inner membrane. F(1)F(0) ATP synthase produces ATP from ADP in the presence of a proton or sodium gradient. F-type ATPases consist of two structural domains, F(1) containing the extramembraneous catalytic core and F(0) containing the membrane proton channel, linked together by a central stalk and a peripheral stalk. During catalysis, ATP synthesis in the catalytic domain of F(1) is coupled via a rotary mechanism of the central stalk subunits to proton translocation. Functionally, this protein is part of the stalk that links CF(0) to CF(1). It either transmits conformational changes from CF(0) to CF(1) or is implicated in proton conduction. This Cereibacter sphaeroides (strain ATCC 17029 / ATH 2.4.9) (Rhodobacter sphaeroides) protein is ATP synthase subunit delta.